The primary structure comprises 602 residues: uncharacterized protein (602 aa).

Residues 271-472 enclose the MCM domain; the sequence is IIDILADILI…RDEEVAKYIF (202 aa). 315 to 322 provides a ligand contact to ATP; the sequence is TEVGIDKT.

This sequence belongs to the MCM family.

This is an uncharacterized protein from Methanocaldococcus jannaschii (strain ATCC 43067 / DSM 2661 / JAL-1 / JCM 10045 / NBRC 100440) (Methanococcus jannaschii).